The primary structure comprises 886 residues: uncharacterized protein (886 aa).

An N-terminal signal peptide occupies residues 1 to 20 (MKIIKSLILLVLFMASPAKG). 5 consecutive transmembrane segments (helical) span residues 520–540 (VTIFGLMFVLGALKLTAVEVV), 609–629 (LLFIQLLQIHNGLAFIVIITI), 647–667 (VIAFIGLTVMISLAPFFIILM), 680–700 (ISILFSYVVQPTILLIFFLLI), and 779–799 (LLFYSYCLMSYGLVSFVTIVV). A disordered region spans residues 856-886 (EARKPQGGGEHTGKFFQNRNDVKPEQTERND). A compositionally biased stretch (basic and acidic residues) spans 875 to 886 (NDVKPEQTERND).

This sequence belongs to the TrbL/VirB6 family.

The protein localises to the cell membrane. This is an uncharacterized protein from Rickettsia bellii (strain RML369-C).